A 348-amino-acid chain; its full sequence is Glycerol-1-phosphate dehydrogenase [NAD(P)+] (348 aa).

NAD(+) is bound by residues 94-98 (GKPID) and 116-119 (TAAS). Asp121 is a substrate binding site. Ser125 contacts NAD(+). Asp168 contributes to the substrate binding site. Positions 168 and 248 each coordinate Zn(2+). A substrate-binding site is contributed by His252. His264 contacts Zn(2+).

It belongs to the glycerol-1-phosphate dehydrogenase family. The cofactor is Zn(2+).

It localises to the cytoplasm. The catalysed reaction is sn-glycerol 1-phosphate + NAD(+) = dihydroxyacetone phosphate + NADH + H(+). It catalyses the reaction sn-glycerol 1-phosphate + NADP(+) = dihydroxyacetone phosphate + NADPH + H(+). It participates in membrane lipid metabolism; glycerophospholipid metabolism. Its function is as follows. Catalyzes the NAD(P)H-dependent reduction of dihydroxyacetonephosphate (DHAP or glycerone phosphate) to glycerol 1-phosphate (G1P). The G1P thus generated is used as the glycerophosphate backbone of phospholipids in the cellular membranes of Archaea. This is Glycerol-1-phosphate dehydrogenase [NAD(P)+] from Haloquadratum walsbyi (strain DSM 16790 / HBSQ001).